The chain runs to 957 residues: Kinesin heavy chain isoform 5C (957 aa).

In terms of domain architecture, Kinesin motor spans 8–327 (SIKVMCRFRP…LMFGQRAKTI (320 aa)). ATP is bound by residues Gln-87, Ser-89, Ser-90, Gly-91, Lys-92, Thr-93, His-94, and Lys-99. The interval 174-315 (VSSPEEVMDV…PSVFNEAETK (142 aa)) is microtubule-binding. Residues 406-923 (VAGISTEEKE…ARRAHSAQIA (518 aa)) are a coiled coil. Residues 859 to 956 (RCELPKLEKR…GSSSNSTHYQ (98 aa)) are globular. The segment at 911–957 (KNMARRAHSAQIAKPIRPGHYPASSPTAVHAIRGGGGSSSNSTHYQK) is disordered.

The protein belongs to the TRAFAC class myosin-kinesin ATPase superfamily. Kinesin family. Kinesin subfamily. As to quaternary structure, oligomer composed of two heavy chains and two light chains. Interacts with GRIP1 and KLC3. Interacts with TRAK1. Interacts with ZFYVE27. In terms of tissue distribution, highest expression in brain, prostate and testis, and moderate expression in kidney, small intestine and ovary.

It is found in the cytoplasm. It localises to the cytoskeleton. Its subcellular location is the cell projection. The protein resides in the dendrite. It carries out the reaction ATP + H2O = ADP + phosphate + H(+). In terms of biological role, microtubule-associated force-producing protein that may play a role in organelle transport. Has ATPase activity. Involved in synaptic transmission. Mediates dendritic trafficking of mRNAs. Required for anterograde axonal transportation of MAPK8IP3/JIP3 which is essential for MAPK8IP3/JIP3 function in axon elongation. The protein is Kinesin heavy chain isoform 5C (KIF5C) of Homo sapiens (Human).